Here is a 560-residue protein sequence, read N- to C-terminus: MKVWMAILISILCWQSSVWAVCPAWSPARAQEEIFRLQQQIKQWDDDYWKEGKSEVEDGVYDQLSARLTQWQRCFVSEPRDVMMPPLNGAVMHPVAHTGVRKMADKNALSLWMRERSDLWVQPKVDGVAVTLVYRDGKLNKAISRGNGLKGEDWTQKVSLISAVPQTVSGPLANSTLQGEIFLQREGHIQQQMGGINARAKVAGLMMRQDDSDTLNSLGVFVWAWPDGPQLMTDRLKELATAGFTLTQRYTRAVKNADEVARVRNEWWKAKLPFVTDGVVVRGAKEPESRHWLPGQAEWLVAWKYQPVAQVAKVKAIQFAVGKSGKISVVASLAPVMLDDKKVQRVNIGSVRRWQEWDIAPGDQILVSLAGQGIPRIDDVVWRGAERTKPTPPENRFNSLTCYFASDVCQEQFISRLVWLGSKQVLGLDGIGEAGWRALHQTHRFEHIFSWLLLTPEQLQNTPGIAKSKSAQLWHRFNLARKQPFTRWVMAMGIPLTRAALNASDERSWSQLLFSTEQFWQQLPGTGSGRARQVIEWKENAQIKKLGSWLAAQQITGFEP.

Lys-124 serves as the catalytic N6-AMP-lysine intermediate.

Belongs to the NAD-dependent DNA ligase family. LigB subfamily.

The catalysed reaction is NAD(+) + (deoxyribonucleotide)n-3'-hydroxyl + 5'-phospho-(deoxyribonucleotide)m = (deoxyribonucleotide)n+m + AMP + beta-nicotinamide D-nucleotide.. Its function is as follows. Catalyzes the formation of phosphodiester linkages between 5'-phosphoryl and 3'-hydroxyl groups in double-stranded DNA using NAD as a coenzyme and as the energy source for the reaction. The chain is DNA ligase B from Escherichia coli O157:H7.